Reading from the N-terminus, the 117-residue chain is Toxin CSTX-8 (117 aa).

Residues 1–20 (MKVLVICAVLFLAIFSNSSA) form the signal peptide. Residues 21–47 (ETEDDFLEDESFQADDVIPFLASEQVR) constitute a propeptide that is removed on maturation. 4 disulfides stabilise this stretch: Cys-50-Cys-65, Cys-57-Cys-74, Cys-64-Cys-95, and Cys-76-Cys-93. Residues 82 to 87 (RSETDR) constitute a propeptide that is removed on maturation. Thr-116 bears the Threonine amide mark.

Belongs to the neurotoxin 19 (CSTX) family. 12 subfamily. Heterodimer of A and B chains; disulfide-linked. Interacts with CSTX-1 (AC P81694), and with CSTX-9 (AC P58604). In terms of tissue distribution, expressed by the venom gland.

It is found in the secreted. The protein localises to the target cell membrane. Its function is as follows. Synergistic toxin that induces or increases a cytolytic effect when combined with CSTX-1 (AC P81694) or CSTX-9 (AC P58604). When alone, has a weak insecticidal activity, with an unknown molecular target. In Cupiennius salei (American wandering spider), this protein is Toxin CSTX-8.